We begin with the raw amino-acid sequence, 162 residues long: Photosystem II extrinsic protein V (162 aa).

The N-terminal stretch at 1-25 is a signal peptide; it reads MLKRCLWLVVTVLFAWQVFNGTAIA. Heme c is bound by residues cysteine 62, cysteine 65, histidine 66, and histidine 117.

The protein belongs to the cytochrome c family. PsbV subfamily. In terms of assembly, PSII is composed of 1 copy each of membrane proteins PsbA, PsbB, PsbC, PsbD, PsbE, PsbF, PsbH, PsbI, PsbJ, PsbK, PsbL, PsbM, PsbT, PsbX, PsbY, PsbZ, Psb30/Ycf12, peripheral proteins PsbO, CyanoQ (PsbQ), PsbU, PsbV and a large number of cofactors. It forms dimeric complexes. Heme c is required as a cofactor.

The protein resides in the cellular thylakoid membrane. Its function is as follows. One of the extrinsic, lumenal subunits of photosystem II (PSII). PSII is a light-driven water plastoquinone oxidoreductase, using light energy to abstract electrons from H(2)O, generating a proton gradient subsequently used for ATP formation. The extrinsic proteins stabilize the structure of photosystem II oxygen-evolving complex (OEC), the ion environment of oxygen evolution and protect the OEC against heat-induced inactivation. Low-potential cytochrome c that plays a role in the OEC of PSII. This chain is Photosystem II extrinsic protein V, found in Cyanothece sp. (strain PCC 7425 / ATCC 29141).